A 274-amino-acid polypeptide reads, in one-letter code: 2,3,4,5-tetrahydropyridine-2,6-dicarboxylate N-succinyltransferase (274 aa).

Substrate is bound by residues Arg106 and Asp143.

It belongs to the transferase hexapeptide repeat family. As to quaternary structure, homotrimer.

Its subcellular location is the cytoplasm. It catalyses the reaction (S)-2,3,4,5-tetrahydrodipicolinate + succinyl-CoA + H2O = (S)-2-succinylamino-6-oxoheptanedioate + CoA. It functions in the pathway amino-acid biosynthesis; L-lysine biosynthesis via DAP pathway; LL-2,6-diaminopimelate from (S)-tetrahydrodipicolinate (succinylase route): step 1/3. The polypeptide is 2,3,4,5-tetrahydropyridine-2,6-dicarboxylate N-succinyltransferase (Albidiferax ferrireducens (strain ATCC BAA-621 / DSM 15236 / T118) (Rhodoferax ferrireducens)).